The primary structure comprises 712 residues: Patatin-like phospholipase domain-containing protein NFIA_019760 (712 aa).

Residues 1–13 show a composition bias toward basic and acidic residues; the sequence is MTSDEKSATRDIY. Positions 1 to 21 are disordered; it reads MTSDEKSATRDIYDPNTLPDY. The chain crosses the membrane as a helical span at residues 85-105; that stretch reads WPFLFTVFAWITVLGFAYTLT. The 192-residue stretch at 275–466 folds into the PNPLA domain; that stretch reads LCLSGGATFA…RTDIPIKALN (192 aa). The GXSXG signature appears at 306–310; the sequence is GTSGG. Ser308 functions as the Nucleophile in the catalytic mechanism. Asp453 (proton acceptor) is an active-site residue. Residues 628–687 form a disordered region; that stretch reads RRRQDRAEEHADRMVERLDQSFPERQSDYKDESHYTEVSDSLSATSSRPHTPDARRSSMF. Basic and acidic residues-rich tracts occupy residues 632 to 646 and 652 to 664; these read DRAEEHADRMVERLD and RQSDYKDESHYTE. Polar residues predominate over residues 665–676; that stretch reads VSDSLSATSSRP. Residues 677–687 show a composition bias toward basic and acidic residues; sequence HTPDARRSSMF.

Belongs to the PLPL family.

It is found in the membrane. Probable lipid hydrolase. This is Patatin-like phospholipase domain-containing protein NFIA_019760 from Neosartorya fischeri (strain ATCC 1020 / DSM 3700 / CBS 544.65 / FGSC A1164 / JCM 1740 / NRRL 181 / WB 181) (Aspergillus fischerianus).